The primary structure comprises 182 residues: R-phycoerythrin subunit beta (182 aa).

Residue Cys82 participates in (2R,3E)-phycoerythrobilin binding.

Belongs to the phycobiliprotein family. As to quaternary structure, homodimer. Contains one covalently linked phycoerythrobilin chromophore.

Functionally, green-light absorbing phycoerythrin of unknown function. The sequence is that of R-phycoerythrin subunit beta (cpeB) from Prochlorococcus marinus (strain SARG / CCMP1375 / SS120).